A 390-amino-acid chain; its full sequence is MWSGQPHPDEGHPPPLEAVPVPWKSVGPCKSHRESLGGLPETPAGEEAQGEEGPAATQLDVSRLRSSSMEIREKGSEFLKEELHKAQKELKLKDEECERLSKVREQLEQELEELTASLFEEAHKMVREANMKQAASEKQLKEARGKIDMLQAEVTALKTLVITSTPASPNRELHPQLLSPTKAGPRKGHLRHKSTSSALCPAVCPVAGHILTPDKEGKEVDTTLFAEFQAWRESPTLDKTSPFLERVYREDVGPCLDFTMQELSALVRAAVEDNTLTIEPVASQTLPAVKVAAVDCGHTNGFRAPIDTTCALSGLACACRHRIRLGDSESHYYISPSSRARITAVCNFFTYIRYIQQGLVRQDAEPMFWEITRLRKEMSLAKLGFFPHEA.

Residues 1-60 are disordered; the sequence is MWSGQPHPDEGHPPPLEAVPVPWKSVGPCKSHRESLGGLPETPAGEEAQGEEGPAATQLD. Positions 40–58 are enriched in low complexity; it reads PETPAGEEAQGEEGPAATQ. A coiled-coil region spans residues 73 to 161; it reads EKGSEFLKEE…AEVTALKTLV (89 aa). The interval 166–194 is disordered; sequence PASPNRELHPQLLSPTKAGPRKGHLRHKS. Phosphoserine occurs at positions 168 and 179. Basic residues predominate over residues 184 to 194; that stretch reads GPRKGHLRHKS.

This sequence belongs to the SEC2 family. As to quaternary structure, interacts with RAB3A and IHPK1 through the coiled-coil domain. This interaction is competitive. IHPK1 kinase activity is not required for this interaction.

Its function is as follows. Guanine nucleotide exchange factor (GEF) which may activate RAB3A, a GTPase that regulates synaptic vesicle exocytosis. Promotes the exchange of GDP to GTP, converting inactive GDP-bound Rab proteins into their active GTP-bound form. May also activate RAB8A and RAB8B. This Bos taurus (Bovine) protein is Guanine nucleotide exchange factor for Rab-3A (RAB3IL1).